The sequence spans 423 residues: Serine hydroxymethyltransferase 2 (423 aa).

Residues L121 and 125 to 127 contribute to the (6S)-5,6,7,8-tetrahydrofolate site; that span reads GHL. Position 230 is an N6-(pyridoxal phosphate)lysine (K230). 356 to 358 is a binding site for (6S)-5,6,7,8-tetrahydrofolate; sequence SPF.

Belongs to the SHMT family. Homodimer. It depends on pyridoxal 5'-phosphate as a cofactor.

It is found in the cytoplasm. The catalysed reaction is (6R)-5,10-methylene-5,6,7,8-tetrahydrofolate + glycine + H2O = (6S)-5,6,7,8-tetrahydrofolate + L-serine. The protein operates within one-carbon metabolism; tetrahydrofolate interconversion. Its pathway is amino-acid biosynthesis; glycine biosynthesis; glycine from L-serine: step 1/1. In terms of biological role, catalyzes the reversible interconversion of serine and glycine with tetrahydrofolate (THF) serving as the one-carbon carrier. This reaction serves as the major source of one-carbon groups required for the biosynthesis of purines, thymidylate, methionine, and other important biomolecules. Also exhibits THF-independent aldolase activity toward beta-hydroxyamino acids, producing glycine and aldehydes, via a retro-aldol mechanism. The sequence is that of Serine hydroxymethyltransferase 2 from Pectobacterium atrosepticum (strain SCRI 1043 / ATCC BAA-672) (Erwinia carotovora subsp. atroseptica).